The primary structure comprises 402 residues: Multidrug resistance protein MdtH (402 aa).

Residues 1–12 lie on the Cytoplasmic side of the membrane; it reads MSRVSQARNLGK. Residues 13–33 traverse the membrane as a helical segment; sequence YFLLIDNMLVVLGFFVVFPLI. Over 34–98 the chain is Periplasmic; that stretch reads SIRFVDQMGW…GFATMGIAHE (65 aa). A helical membrane pass occupies residues 99 to 116; it reads PWLLWFSCLLSGLGGTLF. Over 117–138 the chain is Cytoplasmic; it reads DPPRSALVVKLIRPQQRGRFFS. Residues 139–159 traverse the membrane as a helical segment; it reads LLMMQDSAGAVIGALLGSWLL. The Periplasmic portion of the chain corresponds to 160 to 164; the sequence is QYDFR. Residues 165–185 traverse the membrane as a helical segment; sequence LVCATGAVLFVLCAAFNAWLL. The Cytoplasmic portion of the chain corresponds to 186–213; that stretch reads PAWKLSTVRTPVREGMTRVMRDKRFVTY. Residues 214-234 form a helical membrane-spanning segment; the sequence is VLTLAGYYMLAVQVMLMLPIM. The Periplasmic segment spans residues 235 to 243; that stretch reads VNDVAGAPS. The chain crosses the membrane as a helical span at residues 244–264; it reads AVKWMYAIEACLSLTLLYPIA. At 265-276 the chain is on the cytoplasmic side; sequence RWSEKHFRLEHR. The helical transmembrane segment at 277–297 threads the bilayer; it reads LMAGLLIMSLSMMPVGMVSGL. At 298-299 the chain is on the periplasmic side; it reads QQ. A helical membrane pass occupies residues 300–320; the sequence is LFTLICLFYIGSIIAEPARET. Residues 321–339 lie on the Cytoplasmic side of the membrane; the sequence is LSASLADARARGSYMGFSR. The helical transmembrane segment at 340 to 360 threads the bilayer; that stretch reads LGLAIGGAIGYIGGGWLFDLG. The Periplasmic segment spans residues 361–367; sequence KSAHQPE. The chain crosses the membrane as a helical span at residues 368–388; that stretch reads LPWMMLGIIGIFTFLALGWQF. Topologically, residues 389 to 402 are cytoplasmic; the sequence is SQKRTARRLLERDA.

This sequence belongs to the major facilitator superfamily. DHA1 family. MdtH (TC 2.A.1.2.21) subfamily.

The protein resides in the cell inner membrane. Its function is as follows. Confers resistance to norfloxacin and enoxacin. This chain is Multidrug resistance protein MdtH, found in Escherichia coli O7:K1 (strain IAI39 / ExPEC).